We begin with the raw amino-acid sequence, 1118 residues long: uncharacterized protein (1118 aa).

Disordered regions lie at residues 1-69, 1044-1071, and 1090-1118; these read MESG…NGED, PKSVSSSSSLGRKRGRKRENSEEEEKID, and IRPTVNVEEDQNIKTEIEDSDDLEDSFEL. The segment covering 13-34 has biased composition (acidic residues); that stretch reads DMVEEDNDEDSFEEPACEDSFD. A compositionally biased stretch (polar residues) spans 35–60; sequence SQEASSKANEPQNDSFDEPIQSSVSK. Residues 1107 to 1118 show a composition bias toward acidic residues; the sequence is EDSDDLEDSFEL.

This is an uncharacterized protein from Caenorhabditis elegans.